The following is a 71-amino-acid chain: MPSVRLKENEPFDVAIRRFKRTCEKAGVLSEVRRREFYEKPTAVRKRKAAAAVKRSMKKLARERARRTRLY.

The protein belongs to the bacterial ribosomal protein bS21 family.

This is Small ribosomal subunit protein bS21 from Nitrosococcus oceani (strain ATCC 19707 / BCRC 17464 / JCM 30415 / NCIMB 11848 / C-107).